Consider the following 745-residue polypeptide: 5-methyltetrahydropteroyltriglutamate--homocysteine methyltransferase (745 aa).

5-methyltetrahydropteroyltri-L-glutamate is bound by residues Lys-19 and Asn-115. Residues Ile-420 to Ser-422 and Glu-473 each bind L-homocysteine. L-methionine is bound by residues Ile-420 to Ser-422 and Glu-473. 5-methyltetrahydropteroyltri-L-glutamate is bound by residues Asp-478, Tyr-501, Arg-504–Ala-505, and Trp-550. Asp-588 lines the L-homocysteine pocket. Residue Asp-588 participates in L-methionine binding. Residues His-630, Cys-632, and Glu-654 each contribute to the Zn(2+) site. The active-site Proton donor is the His-683. Zn(2+) is bound at residue Cys-715.

This sequence belongs to the vitamin-B12 independent methionine synthase family. The cofactor is Zn(2+).

It carries out the reaction 5-methyltetrahydropteroyltri-L-glutamate + L-homocysteine = tetrahydropteroyltri-L-glutamate + L-methionine. Its pathway is amino-acid biosynthesis; L-methionine biosynthesis via de novo pathway; L-methionine from L-homocysteine (MetE route): step 1/1. Catalyzes the transfer of a methyl group from 5-methyltetrahydrofolate to homocysteine resulting in methionine formation. This Streptococcus mutans serotype c (strain ATCC 700610 / UA159) protein is 5-methyltetrahydropteroyltriglutamate--homocysteine methyltransferase.